A 474-amino-acid chain; its full sequence is Trigger factor (474 aa).

Positions 171–258 (GDVAVIDFQG…LKELKTRDLP (88 aa)) constitute a PPIase FKBP-type domain. The tract at residues 441-474 (TEVDAASATVETTATETAEEAPEAPKAKKGKKKA) is disordered. Positions 444-456 (DAASATVETTATE) are enriched in low complexity.

The protein belongs to the FKBP-type PPIase family. Tig subfamily.

The protein resides in the cytoplasm. It catalyses the reaction [protein]-peptidylproline (omega=180) = [protein]-peptidylproline (omega=0). In terms of biological role, involved in protein export. Acts as a chaperone by maintaining the newly synthesized protein in an open conformation. Functions as a peptidyl-prolyl cis-trans isomerase. This chain is Trigger factor, found in Synechococcus sp. (strain ATCC 27144 / PCC 6301 / SAUG 1402/1) (Anacystis nidulans).